Here is a 158-residue protein sequence, read N- to C-terminus: Replication and maintenance protein (158 aa).

This Staphylococcus aureus protein is Replication and maintenance protein (repL).